Reading from the N-terminus, the 125-residue chain is UPF0102 protein PBPRA3228 (125 aa).

This sequence belongs to the UPF0102 family.

This Photobacterium profundum (strain SS9) protein is UPF0102 protein PBPRA3228.